A 102-amino-acid polypeptide reads, in one-letter code: UPF0213 protein in potE 3'region (102 aa).

Residues 6–81 (SPWHLYMLRL…KQLSKTQKER (76 aa)) form the GIY-YIG domain.

The protein belongs to the UPF0213 family.

This is UPF0213 protein in potE 3'region from Serratia liquefaciens.